The primary structure comprises 130 residues: Small ribosomal subunit protein uS9 (130 aa).

The span at 99-110 (KKAGFLTRDPRM) shows a compositional bias: basic and acidic residues. The interval 99-130 (KKAGFLTRDPRMKERKKYGLKKARRAPQFSKR) is disordered. A compositionally biased stretch (basic residues) spans 111–130 (KERKKYGLKKARRAPQFSKR).

The protein belongs to the universal ribosomal protein uS9 family.

This Clostridium botulinum (strain Alaska E43 / Type E3) protein is Small ribosomal subunit protein uS9.